A 648-amino-acid chain; its full sequence is MAGARAAAAASAGSTASSGSPPPQEPGLWELLEEFSRTQYRAKDSGGKSGSKVERIEKRCLELFGRDYCFSVIPNVNGDICGHYPRHIVFLEYESSEKEKDTFQSTVQVNKLQDLIHRSKMARCRGRFVCPVILFKGKHICRSATLAGWGELYGRSGYNYLFSGGADDTWASTEDVTEEDFVLRSGDTHLFDKVRGYDIKLLQYLSVKYICDLMVENKKVKFGMNVTSSEKVDKAQRYANFTLLSIPYPGCEFFKEYKDRDYMAEGLIFNWKQDYVDAPLNIPNFLTQSLNIDWSQYQSWDLVQQTQNYLKLLLFIMNRDDDSGLLVHCISGWDRTPLFISLLRLSLWADGLIHTSLKPAEILYLTVAYDWFLFGHMLVDRLSKGEEIFFFCFNFLKHITSEEFCLKTQRRKSLPTRDAGFTVEDICMLRHKDRGSTTSLGSDFSLVLEHSPGAVGSFSYETVELAPAGAPTQAAWRKSHSSSPQSMLWSRPQPSEERLPSHHGLTEAKSSSSSSSNHSDNFFRMGSSPLEVPKPRSVDHPLPGSSLSTDFGSWQLVSGCGSIQDRPVLHTDSSLPFSFQDELPNSCLLTALSDRETRLQEVRSAFLAAYSSTVGLRAATPSPSGAIGGLLEQFARGVGLRGTSTSTL.

Positions M1–G19 are enriched in low complexity. The segment at M1–G27 is disordered. K193 is subject to N6-acetyllysine. N225 and N240 each carry an N-linked (GlcNAc...) asparagine glycan. C329 acts as the Phosphocysteine intermediate in catalysis. A 1,2-diacyl-sn-glycero-3-phospho-(1D-myo-inositol-3,5-bisphosphate) contacts are provided by G332, W333, D334, R335, and R381. The a 1,2-diacyl-sn-glycero-3-phospho-(1D-myo-inositol-3-phosphate) site is built by G332, W333, D334, R335, and R381. A disordered region spans residues P471–G544. The segment covering P494–T506 has biased composition (basic and acidic residues). S516 carries the phosphoserine modification. N-linked (GlcNAc...) asparagine glycosylation occurs at N517. Phosphoserine occurs at positions 528, 578, and 622. R636 carries the omega-N-methylarginine modification.

The protein belongs to the protein-tyrosine phosphatase family. Non-receptor class myotubularin subfamily.

It localises to the cytoplasm. It carries out the reaction a 1,2-diacyl-sn-glycero-3-phospho-(1D-myo-inositol-3,5-bisphosphate) + H2O = a 1,2-diacyl-sn-glycero-3-phospho-(1D-myo-inositol-5-phosphate) + phosphate. It catalyses the reaction a 1,2-diacyl-sn-glycero-3-phospho-(1D-myo-inositol-3-phosphate) + H2O = a 1,2-diacyl-sn-glycero-3-phospho-(1D-myo-inositol) + phosphate. Its function is as follows. Lipid phosphatase that specifically dephosphorylates the D-3 position of phosphatidylinositol 3-phosphate and phosphatidylinositol 3,5-bisphosphate, generating phosphatidylinositol and phosphatidylinositol 5-phosphate. The chain is Phosphatidylinositol-3,5-bisphosphate 3-phosphatase MTMR14 from Mus musculus (Mouse).